Consider the following 111-residue polypeptide: Small ribosomal subunit protein uS15c (111 aa).

This sequence belongs to the universal ribosomal protein uS15 family. In terms of assembly, part of the 30S ribosomal subunit.

It is found in the plastid. The protein resides in the chloroplast. The polypeptide is Small ribosomal subunit protein uS15c (rps15) (Staurastrum punctulatum (Green alga)).